A 349-amino-acid polypeptide reads, in one-letter code: Probable dual-specificity RNA methyltransferase RlmN (349 aa).

The active-site Proton acceptor is glutamate 94. The region spanning 100 to 334 is the Radical SAM core domain; the sequence is TETRTTACVS…VKVRRSRGKD (235 aa). A disulfide bond links cysteine 107 and cysteine 339. Residues cysteine 114, cysteine 118, and cysteine 121 each coordinate [4Fe-4S] cluster. S-adenosyl-L-methionine contacts are provided by residues 165–166, serine 197, 220–222, and asparagine 296; these read GE and SLH. Cysteine 339 serves as the catalytic S-methylcysteine intermediate.

Belongs to the radical SAM superfamily. RlmN family. The cofactor is [4Fe-4S] cluster.

Its subcellular location is the cytoplasm. The enzyme catalyses adenosine(2503) in 23S rRNA + 2 reduced [2Fe-2S]-[ferredoxin] + 2 S-adenosyl-L-methionine = 2-methyladenosine(2503) in 23S rRNA + 5'-deoxyadenosine + L-methionine + 2 oxidized [2Fe-2S]-[ferredoxin] + S-adenosyl-L-homocysteine. It carries out the reaction adenosine(37) in tRNA + 2 reduced [2Fe-2S]-[ferredoxin] + 2 S-adenosyl-L-methionine = 2-methyladenosine(37) in tRNA + 5'-deoxyadenosine + L-methionine + 2 oxidized [2Fe-2S]-[ferredoxin] + S-adenosyl-L-homocysteine. Its function is as follows. Specifically methylates position 2 of adenine 2503 in 23S rRNA and position 2 of adenine 37 in tRNAs. This chain is Probable dual-specificity RNA methyltransferase RlmN, found in Flavobacterium johnsoniae (strain ATCC 17061 / DSM 2064 / JCM 8514 / BCRC 14874 / CCUG 350202 / NBRC 14942 / NCIMB 11054 / UW101) (Cytophaga johnsonae).